The following is a 336-amino-acid chain: Immune-associated nucleotide-binding protein 6 (336 aa).

Positions 33–241 (EPVKNVVLVG…FTDTMHRRIQ (209 aa)) constitute an AIG1-type G domain. The interval 42-49 (GRTGNGKS) is G1. GTP-binding positions include 42-50 (GRTGNGKSA) and serine 63. The interval 69–73 (GVTTR) is G2. Residues 91–94 (DTPG) form a G3 region. The interval 161 to 164 (TCGD) is G4. The G5 stretch occupies residues 200–202 (DNR). Asparagine 201 contacts GTP. The stretch at 237-270 (HRRIQEEAARVKREEKEIEEKNIADEEKAALKKQ) forms a coiled coil.

The protein belongs to the TRAFAC class TrmE-Era-EngA-EngB-Septin-like GTPase superfamily. AIG1/Toc34/Toc159-like paraseptin GTPase family. IAN subfamily. Mostly expressed in pollen. Also detected in lateral roots and radicles.

The sequence is that of Immune-associated nucleotide-binding protein 6 from Arabidopsis thaliana (Mouse-ear cress).